The primary structure comprises 303 residues: Cell division protein ZipA (303 aa).

The Periplasmic portion of the chain corresponds to 1 to 6 (MMQDLR). Residues 7-27 (LILIIVGAIAIIALLLHGLWT) traverse the membrane as a helical segment. Topologically, residues 28 to 303 (SRKERSSLFR…RIRSTLGVQV (276 aa)) are cytoplasmic. Disordered stretches follow at residues 39 to 61 (RPVK…DEAF), 66 to 85 (KPYA…EPAI), and 124 to 159 (EQEP…GEKE). Basic and acidic residues-rich tracts occupy residues 75–85 (SHQEYKAEPAI) and 139–159 (ESER…GEKE).

This sequence belongs to the ZipA family. Interacts with FtsZ via their C-terminal domains.

Its subcellular location is the cell inner membrane. Essential cell division protein that stabilizes the FtsZ protofilaments by cross-linking them and that serves as a cytoplasmic membrane anchor for the Z ring. Also required for the recruitment to the septal ring of downstream cell division proteins. The chain is Cell division protein ZipA from Photorhabdus laumondii subsp. laumondii (strain DSM 15139 / CIP 105565 / TT01) (Photorhabdus luminescens subsp. laumondii).